The following is a 674-amino-acid chain: Probable 3',5'-cyclic-AMP phosphodiesterase pde-4 (674 aa).

The segment at methionine 1–proline 82 is disordered. Positions glycine 15–glycine 24 are enriched in gly residues. Residues arginine 39–alanine 62 show a composition bias toward low complexity. Over residues proline 66–serine 78 the composition is skewed to polar residues. Positions histidine 328–glutamate 660 constitute a PDEase domain. Histidine 407 serves as the catalytic Proton donor. Residues histidine 411, histidine 447, aspartate 448, and aspartate 565 each coordinate a divalent metal cation.

It belongs to the cyclic nucleotide phosphodiesterase family. A divalent metal cation serves as cofactor. As to expression, expressed in dorsal D (DD) motor neurons and several other neurons at the L1 stage. Expression in DD neurons decreases gradually beginning in the late L1 stage. Highly expressed in adult ventral D (VD) motor neurons, but diminished in adult DD motor neurons.

The enzyme catalyses 3',5'-cyclic AMP + H2O = AMP + H(+). Its function is as follows. Hydrolyzes the second messenger 3',5'-cyclic AMP (cAMP), which is a key regulator of many important physiological processes. Antagonizes dorsal D (DD) motor neuron respecification by reducing levels of cAMP. The protein is Probable 3',5'-cyclic-AMP phosphodiesterase pde-4 (pde-4) of Caenorhabditis elegans.